Reading from the N-terminus, the 194-residue chain is Mersacidin decarboxylase (194 aa).

The active site involves His-75.

The protein belongs to the HFCD (homooligomeric flavin containing Cys decarboxylase) superfamily. In terms of assembly, homododecamer. It depends on FAD as a cofactor.

Its pathway is antibiotic biosynthesis; mersacidin biosynthesis. Functionally, catalyzes the oxidative decarboxylation of the C-terminal cysteine residue of mersacidin to an aminoenethiol residue. The polypeptide is Mersacidin decarboxylase (mrsD) (Bacillus sp. (strain HIL-Y85/54728)).